A 213-amino-acid chain; its full sequence is Negative modulator of initiation of replication (213 aa).

Interaction with DNA regions lie at residues 116-117, 145-149, and 179-185; these read AV, RTRVY, and NTNSGRK.

The protein belongs to the SeqA family. In terms of assembly, homodimer. Polymerizes to form helical filaments.

It is found in the cytoplasm. Its function is as follows. Negative regulator of replication initiation, which contributes to regulation of DNA replication and ensures that replication initiation occurs exactly once per chromosome per cell cycle. Binds to pairs of hemimethylated GATC sequences in the oriC region, thus preventing assembly of replication proteins and re-initiation at newly replicated origins. Repression is relieved when the region becomes fully methylated. In Haemophilus parainfluenzae (strain T3T1), this protein is Negative modulator of initiation of replication.